The primary structure comprises 492 residues: Probable protein phosphatase 2C 33 (492 aa).

The segment at 1–46 is disordered; sequence MGSCLSAESRSPRPGSPCSPAFSVRKRKNSKKRPGSRNSSFDYRRE. A compositionally biased stretch (basic residues) spans 24–35; the sequence is VRKRKNSKKRPG. The PPM-type phosphatase domain maps to 64–393; the sequence is VACIYTQQGK…DDCAAVCLYL (330 aa). Residues D100, G101, D338, and D384 each contribute to the Mn(2+) site. A disordered region spans residues 406–468; the sequence is SISKLEDGEE…ADNLDSEPGT (63 aa). The segment covering 412–427 has biased composition (acidic residues); it reads DGEEEELKATTEDDDA. A compositionally biased stretch (basic and acidic residues) spans 441-460; it reads SGKEIALDESETEKLIKEAD.

The protein belongs to the PP2C family. Requires Mg(2+) as cofactor. The cofactor is Mn(2+).

The enzyme catalyses O-phospho-L-seryl-[protein] + H2O = L-seryl-[protein] + phosphate. It catalyses the reaction O-phospho-L-threonyl-[protein] + H2O = L-threonyl-[protein] + phosphate. This chain is Probable protein phosphatase 2C 33 (PPC6-1), found in Arabidopsis thaliana (Mouse-ear cress).